Reading from the N-terminus, the 479-residue chain is Preferentially expressed antigen in melanoma-like protein 7 (479 aa).

The LRR 1; degenerate repeat unit spans residues 96–124 (MGRLKKVDFRDAQHHASLDMQDEREGRDY). The stretch at 179-203 (HLCCEKLEIGAVEVSKVRNVLKFLQ) is one LRR 2; degenerate repeat. The stretch at 204–230 (PELIKELKLNTVGNLSKLAKFVPFIRK) is one LRR 3; degenerate repeat. An LRR 4; degenerate repeat occupies 231–265 (MRNLQKLMLVRTFGTRTFTQEEKQNISKIISLFCK). 5 LRR repeats span residues 266-291 (LSCL…LRCL), 292-323 (EAPL…SQLK), 324-347 (HLCL…LKRV), 348-375 (AANL…ALIK), and 376-400 (CTQL…FLHR).

Belongs to the PRAME family. As to quaternary structure, interacts with UHRF1. Seems to be specific to pluripotent tissues in the early embryo. Not detected in somatic tissues.

In terms of biological role, promotes maintenance and self-renewal of pluripotent embryonic stem cells (ESCs), downstream of LIF/STAT3. Maintains the pluripotency state of ESCs by repressing DNA methylation through the regulation of UHRF1 stability. Mediates the proteasomal degradation of UHRF1. Is required for the establishment of the blastocyst. The sequence is that of Preferentially expressed antigen in melanoma-like protein 7 from Mus musculus (Mouse).